A 336-amino-acid polypeptide reads, in one-letter code: Mitochondrial import receptor subunit TOM40 homolog (336 aa).

A disordered region spans residues 1-58; sequence MGNVLAASSPAPPPAGSPPVPGLVSVPPGFTMPPVAGLTPTPDKKEPQEERLPNPGTF. A compositionally biased stretch (pro residues) spans 10 to 21; sequence PAPPPAGSPPVP. Basic and acidic residues predominate over residues 42–52; sequence PDKKEPQEERL.

It belongs to the Tom40 family. As to quaternary structure, forms part of the preprotein translocase complex of the outer mitochondrial membrane (TOM complex). Interacts with mitochondrial targeting sequences.

The protein localises to the mitochondrion outer membrane. Functionally, channel-forming protein essential for import of protein precursors into mitochondria. In Xenopus laevis (African clawed frog), this protein is Mitochondrial import receptor subunit TOM40 homolog (tomm40).